The sequence spans 430 residues: Bystin (430 aa).

Composition is skewed to basic residues over residues 1–12 (MGKDKKDRKHKG) and 26–35 (PSKRVKHRRE). 2 disordered regions span residues 1-45 (MGKD…ESFV) and 65-113 (MEEY…SETY). Positions 68–78 (YGFRKTGDRKT) are enriched in basic and acidic residues. Positions 93-104 (RIDDDDEDDSDD) are enriched in acidic residues.

It belongs to the bystin family.

The protein localises to the nucleus. It localises to the nucleolus. Required for processing of 20S pre-rRNA precursor and biogenesis of 40S ribosomal subunits. This Nematostella vectensis (Starlet sea anemone) protein is Bystin (bysl).